The following is a 269-amino-acid chain: Formamidopyrimidine-DNA glycosylase (269 aa).

P2 serves as the catalytic Schiff-base intermediate with DNA. E3 functions as the Proton donor in the catalytic mechanism. The active-site Proton donor; for beta-elimination activity is K57. Positions 90, 109, and 150 each coordinate DNA. An FPG-type zinc finger spans residues 235 to 269 (LVYGKAGEPCPECGEPLQELKIGQRNTFFCNECQQ). R259 serves as the catalytic Proton donor; for delta-elimination activity.

This sequence belongs to the FPG family. Monomer. Zn(2+) serves as cofactor.

The enzyme catalyses Hydrolysis of DNA containing ring-opened 7-methylguanine residues, releasing 2,6-diamino-4-hydroxy-5-(N-methyl)formamidopyrimidine.. The catalysed reaction is 2'-deoxyribonucleotide-(2'-deoxyribose 5'-phosphate)-2'-deoxyribonucleotide-DNA = a 3'-end 2'-deoxyribonucleotide-(2,3-dehydro-2,3-deoxyribose 5'-phosphate)-DNA + a 5'-end 5'-phospho-2'-deoxyribonucleoside-DNA + H(+). Involved in base excision repair of DNA damaged by oxidation or by mutagenic agents. Acts as a DNA glycosylase that recognizes and removes damaged bases. Has a preference for oxidized purines, such as 7,8-dihydro-8-oxoguanine (8-oxoG). Has AP (apurinic/apyrimidinic) lyase activity and introduces nicks in the DNA strand. Cleaves the DNA backbone by beta-delta elimination to generate a single-strand break at the site of the removed base with both 3'- and 5'-phosphates. This chain is Formamidopyrimidine-DNA glycosylase, found in Vibrio parahaemolyticus serotype O3:K6 (strain RIMD 2210633).